The following is a 338-amino-acid chain: Tripartite motif-containing protein 44 (338 aa).

Disordered stretches follow at residues 1–25 (MASG…EPDE) and 72–162 (ARGD…EFDP). Positions 95-162 (EAGEGIESEE…ETEAESEFDP (68 aa)) are enriched in acidic residues. Residues 109-153 (EEESETEEESEDESEEDSEEEMEDEQESEAEEDNQEEGESEAEGE) are a coiled coil. Residues 171–212 (VAKRKCPDHGLDLSTYCQEDKQLICVLCPVIGAHHGHHLSTL) form a B box-type zinc finger. Positions 176, 179, 198, and 204 each coordinate Zn(2+). Residues 257–322 (QQEFKKVQKV…QLDTSNESAE (66 aa)) are a coiled coil. The segment at 307–338 (MAQAKEQLDTSNESAEPKAEGDEEEPGGTDED) is disordered. A compositionally biased stretch (acidic residues) spans 327–338 (GDEEEPGGTDED).

In terms of assembly, interacts (via coiled coil) with TRIM17 (via coiled coil).

May play a role in the process of differentiation and maturation of neuronal cells. May regulate the activity of TRIM17. Is a negative regulator of PAX6 expression. In Bos taurus (Bovine), this protein is Tripartite motif-containing protein 44 (TRIM44).